The chain runs to 699 residues: Elongation factor G 1 (699 aa).

The region spanning 8 to 290 is the tr-type G domain; it reads ERYRNIGICA…AVIEYLPSPT (283 aa). GTP contacts are provided by residues 17 to 24, 88 to 92, and 142 to 145; these read AHVDAGKT, DTPGH, and NKMD.

It belongs to the TRAFAC class translation factor GTPase superfamily. Classic translation factor GTPase family. EF-G/EF-2 subfamily.

Its subcellular location is the cytoplasm. Catalyzes the GTP-dependent ribosomal translocation step during translation elongation. During this step, the ribosome changes from the pre-translocational (PRE) to the post-translocational (POST) state as the newly formed A-site-bound peptidyl-tRNA and P-site-bound deacylated tRNA move to the P and E sites, respectively. Catalyzes the coordinated movement of the two tRNA molecules, the mRNA and conformational changes in the ribosome. The sequence is that of Elongation factor G 1 from Hahella chejuensis (strain KCTC 2396).